The primary structure comprises 436 residues: bZIP transcription factor RISBZ1 (436 aa).

The tract at residues 1-27 (MEHVFAVDEIPDPLWAPPPPVQPAAAA) is required for transactivation activity. The interval 182 to 258 (LSPGPNGGSG…SARRSRSRKA (77 aa)) is disordered. The segment covering 215–225 (PSEDDDMEGDA) has biased composition (acidic residues). The bZIP domain maps to 236 to 299 (EDKVKKRKES…SAAAIDNRVL (64 aa)). Positions 238–257 (KVKKRKESNRESARRSRSRK) are basic motif. The leucine-zipper stretch occupies residues 264–278 (LEEQVSLLRVENSSL).

Homodimer. Forms heterodimers with RISBZ2/BZP33 and RISBZ3/BZP20. Interacts with DOF3/RPBF. In terms of tissue distribution, specifically expressed in seeds. Expressed in aleurone and subaleurone layers of maturing seeds, but not in the embryo tissues.

The protein localises to the nucleus. Its function is as follows. Transcriptional activator that binds to the DNA specific sequence 5'-TGAGTCA-3' found in seed storage protein gene promoters. Involved in the endosperm-specific regulation of storage protein genes. Can activate the expression of genes encoding for the seed storage proteins glutelin, prolamin, globulin and the allergen RAG1. Functions synergistically with DOF3/RPBF to positively regulate quantitatively many seed storage protein genes. Functions synergistically with DOF3/RPBF to positively regulate some metabolic enzymes, such as alanine aminotransferase and pyruvate phosphate dikinase, that are expressed in developing seeds. Functions synergistically with DOF3/RPBF to positively regulate genes that are key players in the development of aleurone layers. Functions synergistically with DOF3/RPBF to positively regulate the glutelin GLUD-1 gene in endosperm of developing seeds. Can activate the expression of the bifunctional lysine-degrading enzyme, lysine ketoglutarate reductase/saccharopine dehydrogenase (LKR/SDH), one of the key regulators determining free lysine content in plants. Functions as a key regulator of starch synthesis in seeds, by direct binding to the promoters of starch-synthesizing genes, such as AGPL3, WAXXY and SBE1. The protein is bZIP transcription factor RISBZ1 of Oryza sativa subsp. japonica (Rice).